A 329-amino-acid polypeptide reads, in one-letter code: Olfactory receptor 52L1 (329 aa).

Topologically, residues 1–43 (MTLVSFFSFLSKPLIMLLSNSSWRLSQPSFLLVGIPGLEESQH) are extracellular. N-linked (GlcNAc...) asparagine glycosylation occurs at N20. A helical membrane pass occupies residues 44–64 (WIALPLGILYLLALVGNVTIL). Residues 65-72 (FIIWMDPS) lie on the Cytoplasmic side of the membrane. A helical transmembrane segment spans residues 73-93 (LHQSMYLFLSMLAAIDLVLAS). The Extracellular segment spans residues 94–117 (STAPKALAVLLVHAHEIGYIVCLI). A disulfide bond links C115 and C207. The helical transmembrane segment at 118–138 (QMFFIHAFSSMESGVLVAMAL) threads the bilayer. The Cytoplasmic portion of the chain corresponds to 139–157 (DRYVAICHPLHHSTILHPG). The chain crosses the membrane as a helical span at residues 158-178 (VIGRIGMVVLVRGLLLLIPFP). At 179–214 (ILLGTLIFCQATIIGHAYCEHMAVVKLACSETTVNR) the chain is on the extracellular side. The chain crosses the membrane as a helical span at residues 215–235 (AYGLTMALLVIGLDVLAIGVS). At 236-255 (YAHILQAVLKVPGSEARLKA) the chain is on the cytoplasmic side. A helical membrane pass occupies residues 256–276 (FSTCGSHICVILVFYVPGIFS). The Extracellular segment spans residues 277–291 (FLTHRFGHHVPHHVH). A helical membrane pass occupies residues 292 to 312 (VLLATRYLLMPPALNPLVYGV). The Cytoplasmic portion of the chain corresponds to 313 to 329 (KTQQIRQRVLRVFTQKD).

This sequence belongs to the G-protein coupled receptor 1 family.

The protein localises to the cell membrane. Odorant receptor. In Homo sapiens (Human), this protein is Olfactory receptor 52L1 (OR52L1).